Reading from the N-terminus, the 122-residue chain is Large ribosomal subunit protein uL18 (122 aa).

This sequence belongs to the universal ribosomal protein uL18 family. As to quaternary structure, part of the 50S ribosomal subunit; part of the 5S rRNA/L5/L18/L25 subcomplex. Contacts the 5S and 23S rRNAs.

This is one of the proteins that bind and probably mediate the attachment of the 5S RNA into the large ribosomal subunit, where it forms part of the central protuberance. The protein is Large ribosomal subunit protein uL18 of Synechococcus sp. (strain JA-3-3Ab) (Cyanobacteria bacterium Yellowstone A-Prime).